The following is a 344-amino-acid chain: Phosphoribosylformylglycinamidine cyclo-ligase (344 aa).

This sequence belongs to the AIR synthase family.

Its subcellular location is the cytoplasm. It catalyses the reaction 2-formamido-N(1)-(5-O-phospho-beta-D-ribosyl)acetamidine + ATP = 5-amino-1-(5-phospho-beta-D-ribosyl)imidazole + ADP + phosphate + H(+). It participates in purine metabolism; IMP biosynthesis via de novo pathway; 5-amino-1-(5-phospho-D-ribosyl)imidazole from N(2)-formyl-N(1)-(5-phospho-D-ribosyl)glycinamide: step 2/2. The sequence is that of Phosphoribosylformylglycinamidine cyclo-ligase from Haemophilus influenzae (strain 86-028NP).